A 588-amino-acid chain; its full sequence is ATP-dependent lipid A-core flippase (588 aa).

Helical transmembrane passes span F23–G43, F56–T76, D141–M161, V162–V182, L257–I277, and T278–M298. The region spanning L28–R310 is the ABC transmembrane type-1 domain. Residues I342–V576 form the ABC transporter domain. ATP is bound at residue G375–T382.

It belongs to the ABC transporter superfamily. Lipid exporter (TC 3.A.1.106) family. In terms of assembly, homodimer.

Its subcellular location is the cell inner membrane. It carries out the reaction ATP + H2O + lipid A-core oligosaccharideSide 1 = ADP + phosphate + lipid A-core oligosaccharideSide 2.. In terms of biological role, involved in lipopolysaccharide (LPS) biosynthesis. Translocates lipid A-core from the inner to the outer leaflet of the inner membrane. Transmembrane domains (TMD) form a pore in the inner membrane and the ATP-binding domain (NBD) is responsible for energy generation. This Legionella pneumophila subsp. pneumophila (strain Philadelphia 1 / ATCC 33152 / DSM 7513) protein is ATP-dependent lipid A-core flippase.